Consider the following 966-residue polypeptide: Insulin-degrading enzyme-like 2 (966 aa).

Histidine 71 is a Zn(2+) binding site. Glutamate 74 (proton acceptor) is an active-site residue. Residue histidine 75 coordinates Zn(2+). Glutamate 145 is an active-site residue. Position 152 (glutamate 152) interacts with Zn(2+).

The protein belongs to the peptidase M16 family. Requires Zn(2+) as cofactor.

This is Insulin-degrading enzyme-like 2 from Arabidopsis thaliana (Mouse-ear cress).